The primary structure comprises 443 residues: Xaa-Pro dipeptidase (443 aa).

Positions 246, 257, 339, 384, and 423 each coordinate Mn(2+).

The protein belongs to the peptidase M24B family. Bacterial-type prolidase subfamily. Requires Mn(2+) as cofactor.

It carries out the reaction Xaa-L-Pro dipeptide + H2O = an L-alpha-amino acid + L-proline. In terms of biological role, splits dipeptides with a prolyl residue in the C-terminal position. This chain is Xaa-Pro dipeptidase, found in Salmonella choleraesuis (strain SC-B67).